The following is a 615-amino-acid chain: 1-deoxy-D-xylulose-5-phosphate synthase (615 aa).

Residues H76 and 117–119 (GHS) contribute to the thiamine diphosphate site. D148 lines the Mg(2+) pocket. Thiamine diphosphate is bound by residues 149-150 (GA), N177, Y284, and E365. Position 177 (N177) interacts with Mg(2+).

The protein belongs to the transketolase family. DXPS subfamily. In terms of assembly, homodimer. Mg(2+) serves as cofactor. The cofactor is thiamine diphosphate.

The enzyme catalyses D-glyceraldehyde 3-phosphate + pyruvate + H(+) = 1-deoxy-D-xylulose 5-phosphate + CO2. Its pathway is metabolic intermediate biosynthesis; 1-deoxy-D-xylulose 5-phosphate biosynthesis; 1-deoxy-D-xylulose 5-phosphate from D-glyceraldehyde 3-phosphate and pyruvate: step 1/1. Catalyzes the acyloin condensation reaction between C atoms 2 and 3 of pyruvate and glyceraldehyde 3-phosphate to yield 1-deoxy-D-xylulose-5-phosphate (DXP). The sequence is that of 1-deoxy-D-xylulose-5-phosphate synthase from Francisella tularensis subsp. holarctica (strain FTNF002-00 / FTA).